We begin with the raw amino-acid sequence, 293 residues long: Acetylglutamate kinase (293 aa).

Substrate-binding positions include 68-69 (GG), R90, and N189.

Belongs to the acetylglutamate kinase family. ArgB subfamily.

Its subcellular location is the cytoplasm. It catalyses the reaction N-acetyl-L-glutamate + ATP = N-acetyl-L-glutamyl 5-phosphate + ADP. The protein operates within amino-acid biosynthesis; L-arginine biosynthesis; N(2)-acetyl-L-ornithine from L-glutamate: step 2/4. Catalyzes the ATP-dependent phosphorylation of N-acetyl-L-glutamate. This Mycobacterium ulcerans (strain Agy99) protein is Acetylglutamate kinase.